The sequence spans 134 residues: ATP synthase epsilon chain (134 aa).

Over residues 94-104 (AKLAKSRAESH) the composition is skewed to basic and acidic residues. A disordered region spans residues 94–115 (AKLAKSRAESHLEEDDDNTDIN).

The protein belongs to the ATPase epsilon chain family. As to quaternary structure, F-type ATPases have 2 components, CF(1) - the catalytic core - and CF(0) - the membrane proton channel. CF(1) has five subunits: alpha(3), beta(3), gamma(1), delta(1), epsilon(1). CF(0) has three main subunits: a, b and c.

Its subcellular location is the cell membrane. Functionally, produces ATP from ADP in the presence of a proton gradient across the membrane. The chain is ATP synthase epsilon chain from Staphylococcus epidermidis (strain ATCC 35984 / DSM 28319 / BCRC 17069 / CCUG 31568 / BM 3577 / RP62A).